The chain runs to 359 residues: Acidic skeletal organic matrix protein (359 aa).

The first 26 residues, 1–26, serve as a signal peptide directing secretion; that stretch reads MLAPRLAFVLLLSSYFGSILITSVES. 2 disordered regions span residues 60-83 and 224-254; these read FEED…EDFD and SEAE…DPNE. Residues 66 to 89 are a coiled coil; the sequence is DDDDEDNEESENEVEDFDDENALS.

Component of the acid-insoluble and acid-soluble organic matrix of the aragonitic skeleton (at protein level).

It is found in the secreted. This chain is Acidic skeletal organic matrix protein, found in Acropora millepora (Staghorn coral).